A 385-amino-acid chain; its full sequence is Leucine aminopeptidase 1 (385 aa).

Positions 1–19 (MKFPSFLSLGIAASTTALA) are cleaved as a signal peptide. A propeptide spanning residues 20–87 (ALPDQKPIGD…FPRAFAKTAV (68 aa)) is cleaved from the precursor. Asparagine 177 carries an N-linked (GlcNAc...) asparagine glycan. Residues histidine 185 and aspartate 204 each contribute to the Zn(2+) site. A glycan (N-linked (GlcNAc...) asparagine) is linked at asparagine 229. 2 residues coordinate Zn(2+): glutamate 243 and aspartate 270. Cysteines 319 and 323 form a disulfide. Residue histidine 352 participates in Zn(2+) binding.

It belongs to the peptidase M28 family. M28E subfamily. In terms of assembly, monomer. It depends on Zn(2+) as a cofactor.

The protein resides in the secreted. Extracellular aminopeptidase that allows assimilation of proteinaceous substrates. The sequence is that of Leucine aminopeptidase 1 (LAP1) from Blastomyces gilchristii (strain SLH14081) (Blastomyces dermatitidis).